Here is a 1163-residue protein sequence, read N- to C-terminus: DNA-directed RNA polymerase subunit beta' (1163 aa).

Cys59, Cys61, Cys74, and Cys77 together coordinate Zn(2+). 3 residues coordinate Mg(2+): Asp449, Asp451, and Asp453. Residues Cys794, Cys868, Cys875, and Cys878 each coordinate Zn(2+).

It belongs to the RNA polymerase beta' chain family. As to quaternary structure, the RNAP catalytic core consists of 2 alpha, 1 beta, 1 beta' and 1 omega subunit. When a sigma factor is associated with the core the holoenzyme is formed, which can initiate transcription. It depends on Mg(2+) as a cofactor. The cofactor is Zn(2+).

It carries out the reaction RNA(n) + a ribonucleoside 5'-triphosphate = RNA(n+1) + diphosphate. Its function is as follows. DNA-dependent RNA polymerase catalyzes the transcription of DNA into RNA using the four ribonucleoside triphosphates as substrates. The protein is DNA-directed RNA polymerase subunit beta' of Caldicellulosiruptor saccharolyticus (strain ATCC 43494 / DSM 8903 / Tp8T 6331).